Reading from the N-terminus, the 425-residue chain is Tyrosine--tRNA ligase (425 aa).

L-tyrosine is bound at residue tyrosine 34. The 'HIGH' region signature appears at 39 to 48; it reads PTADSLHVGN. Residues tyrosine 171 and glutamine 175 each coordinate L-tyrosine. The 'KMSKS' region signature appears at 231–235; it reads KYGKS. Residue lysine 234 participates in ATP binding. The 67-residue stretch at 358-424 folds into the S4 RNA-binding domain; it reads APLVELLVHA…GKRTYTVVKI (67 aa).

Belongs to the class-I aminoacyl-tRNA synthetase family. TyrS type 1 subfamily. Homodimer.

The protein localises to the cytoplasm. It catalyses the reaction tRNA(Tyr) + L-tyrosine + ATP = L-tyrosyl-tRNA(Tyr) + AMP + diphosphate + H(+). Its function is as follows. Catalyzes the attachment of tyrosine to tRNA(Tyr) in a two-step reaction: tyrosine is first activated by ATP to form Tyr-AMP and then transferred to the acceptor end of tRNA(Tyr). In Opitutus terrae (strain DSM 11246 / JCM 15787 / PB90-1), this protein is Tyrosine--tRNA ligase.